Consider the following 405-residue polypeptide: D-threonate kinase (405 aa).

Substrate is bound by residues Asp12, Arg59, and 88–91; that span reads KVDS. Residues Ser243, 337–340, and Gly383 contribute to the ATP site; that span reads GGDG.

It belongs to the four-carbon acid sugar kinase family.

It carries out the reaction D-threonate + ATP = 4-O-phospho-D-threonate + ADP + H(+). Its function is as follows. Catalyzes the ATP-dependent phosphorylation of D-threonate to D-threonate 4-phosphate. Can also phosphorylate 4-hydroxy-L-threonine, with lower efficiency. This Bordetella bronchiseptica (strain ATCC BAA-588 / NCTC 13252 / RB50) (Alcaligenes bronchisepticus) protein is D-threonate kinase.